A 113-amino-acid chain; its full sequence is Hydrogenase maturation factor HypA (113 aa).

Ni(2+) is bound at residue H2. Zn(2+) contacts are provided by C70, C73, C86, and C88.

This sequence belongs to the HypA/HybF family.

Functionally, involved in the maturation of [NiFe] hydrogenases. Required for nickel insertion into the metal center of the hydrogenase. In Nostoc sp. (strain PCC 7120 / SAG 25.82 / UTEX 2576), this protein is Hydrogenase maturation factor HypA.